The following is a 70-amino-acid chain: Conotoxin TxMMSK-02 (70 aa).

The signal sequence occupies residues 1 to 20 (MMSKLGALLTICLLLFSLTA). Residues 21 to 53 (VPLDGDQHADQPAQRLQDRIPTEDHPLFDPNKR) constitute a propeptide that is removed on maturation. 3 cysteine pairs are disulfide-bonded: C54–C68, C55–C64, and C60–C67. P66 bears the 4-hydroxyproline mark. Y69 is subject to Tyrosine amide.

This sequence belongs to the conotoxin M superfamily. In terms of tissue distribution, expressed by the venom duct.

It is found in the secreted. This Conus textile (Cloth-of-gold cone) protein is Conotoxin TxMMSK-02.